Reading from the N-terminus, the 212-residue chain is Eggshell protein 1 (212 aa).

The first 27 residues, 1–27, serve as a signal peptide directing secretion; it reads MKSSLTLLFLAAIGYTIAYPPPSDYDS. Residues 155–212 form a disordered region; that stretch reads RKNGHGKGGKGGNGGGGGKGGGKGGGNGKGNGKGGGGKNGGGKGGNGGKGGSYAPSYY. The segment covering 163 to 205 has biased composition (gly residues); sequence GKGGNGGGGGKGGGKGGGNGKGNGKGGGGKNGGGKGGNGGKGG.

As to expression, detected only in mature female parasites.

The polypeptide is Eggshell protein 1 (ESG-1) (Schistosoma japonicum (Blood fluke)).